We begin with the raw amino-acid sequence, 599 residues long: MMIDQIAQESARPAWQTHDHLDDPVMGELRNHFGPDAFTVQPTRTGIPVVWVKREQLLEVMTFLKKLPKPYVMLFDLHGMDERQRTHRQGLPAADFSVFYHLLSIERNRDIMLKVALSEKELNLPTATPLFPNANWYERETWEMFGVVFNGHPNLRRIMLPPTWEGHPLRKDYPARATEFDPFELTRQKEDLEMEALTFKPEEWGMKRGTENEDFMFLNLGPNHPSSHGAFRIILQLDGEEIVDCVPDIGYHHRGAEKMGERQSWHSYIPYTDRIEYLGGCVNEMPYVLAVEKLAGIEVPDRVKTIRVMLSELFRINSHLLYISTFIQDVGGMTPVFFAFTDRQKVYDLVEAITGFRMHPAWFRIGGVAHDLPRGWDRLLRDFLNWMPKRLDSYVKAALKNSILKGRAIGVAAYNSKQALEWGTTGAGLRATGIAFDVRKWRPYSGYENFDFDVPIGNNGDCYDRVMLKVEEVRQSLRILKQCLDNMPEGPFKADHPLTTPPPKERTLQHIETMINHFLQVSWGPVMPANESFQMIEATKGINSYYLTSDGSTVSYRTRVRTPSYPHLQQIPSVIRGSLVSDLIVYLGSIDFVMSDVDR.

Residues Met1–Glu190 form an NADH dehydrogenase I subunit C region. The tract at residues Asp214 to Arg599 is NADH dehydrogenase I subunit D.

The protein in the N-terminal section; belongs to the complex I 30 kDa subunit family. In the C-terminal section; belongs to the complex I 49 kDa subunit family. NDH-1 is composed of 13 different subunits. Subunits NuoB, CD, E, F, and G constitute the peripheral sector of the complex.

The protein localises to the cell inner membrane. The enzyme catalyses a quinone + NADH + 5 H(+)(in) = a quinol + NAD(+) + 4 H(+)(out). Its function is as follows. NDH-1 shuttles electrons from NADH, via FMN and iron-sulfur (Fe-S) centers, to quinones in the respiratory chain. The immediate electron acceptor for the enzyme in this species is believed to be ubiquinone. Couples the redox reaction to proton translocation (for every two electrons transferred, four hydrogen ions are translocated across the cytoplasmic membrane), and thus conserves the redox energy in a proton gradient. The protein is NADH-quinone oxidoreductase subunit C/D of Photorhabdus laumondii subsp. laumondii (strain DSM 15139 / CIP 105565 / TT01) (Photorhabdus luminescens subsp. laumondii).